The primary structure comprises 1509 residues: MPFRGRRRQSALRGLSLAATFCLAAGSSGISGALFATPAQADPLPTAAGLSINSANLTVEVSADFPQALSYTETSSAKHLSGARTLASSITINGTDQPVKVSSQKADAQTVNYLITPNNLAGVSLDAQLRVEGMTLTFKISKIKDTAENRVNNLQIKNQDLVTVSSQEPGATVASAVVSVDRAVSGDTITNLSSTTALDPTAKRSMLAIAATDQLAAGFETNSLYDSGNTIGPSDQGKFWRQALADGTGADGKPAVKMAVSSGAWLYRSAGSDQTEELPWSKVVISGDANADGKVDWQDGAIAYRSIESKPAGGDDVKNRVVTHIPFNFASQATHPFLRTLDDVKHIALATDGLGQMALEKGYTSEGHDSANSDFGGNFNERAGGLTDFNAMLSGGSAYGATFGVHINNTEAYPEANSFSNDFVDPTKKGWNWLDQSFYIDQQRDILSGSQQQRIDQLRSEAGPNLTMAYVDVYYESGWKSYRLQKGLKDAGFSVASEFATAMPANNTWSHWANDEKHGGSNNIKAGTQILRFVDNSQRDIWNPDPLLGTSHIVEWEGWTNQNDYNAFLKNIWGNNLPVKFLQQQQITSWKSRSVDLTGGLKVTGTSLADRVISQQGVPVLKGSNYLLPWSAAPVSFGSGAVNDTTQNKLYHYSADGGTSTWQLTPQFATASSLQIYKLTDYGRELIGSVPVVNGSVTLTAEANQAYVLVADASVTTVPADPSYGAGSKVKDPGFNSAGLKDWNATGGAAVERTAQGLLVAKLGQGSSAISQTLGSLDPGSYSIGAWVEIEPTTLTVTPAGGAPISVTVDQSGAENFVASDEKRGTYFQRLRVLVDIANAGAPQLSISAPAGEAAVRIDDVRVVKANKVPTTGILSENFENTDQGWLPFIKGDAGGQTDPRTHIAKLNAPYTQKGWNGKTTSDVLDDTYSLHSHEENQGLVYRTSNYTLPLQAGRQYRVSFDYQASLANQYTWVSGYDSGKNPVQTASTAIPVATDTTRWSQTLSAGSCGPAWVGLQRTGSSGGAEFSMDNLLVEDLGPSAETPACASLSLTSGQDVIEQGQTNTFSASFSSSEAQSIAGLSVALDLPAGWTASAATPATAATLPAGGSLETQWKVQVPADADGDYTIKAKASYQTTVDPIGSRSATTETAVYTLPKPPTKDTYASDMQWIGTPSNGWGPVEKDQANGEQAQGDGPPLKLGGVTYPKGLGAHAASSIRYYVGSQCSAFTAVIGIDDFQKLKGQAVFSVLGDGNSLYTSPVMKGGAAAQTITVPLNGAKYVDLKVAISGANNGNAWSDWANAKFLCSAPVAPITLQPTLSVPTDSLQPGSAFTVRVDQLKSGSTAKAELHSDPIDLGSVQANNDGVASFQVTLAQDAPLGNHQIVVTGTDKNGLAATGTVDAQIKAANPNPGTGSNPGTGSNPGTDPGTGSAGGNSSGGGANGSGANGTYVNGSGGSFGNGAGMDAKTGSNSASSLAETGFSGLVLPLGIGLMLLLIGAAAIIVRRHRHS.

An N-terminal signal peptide occupies residues 1 to 41 (MPFRGRRRQSALRGLSLAATFCLAAGSSGISGALFATPAQA). The Ca(2+) site is built by Asp288, Asn290, Asp292, Lys294, and Asp299. The segment at 313–585 (GGDDVKNRVV…NLPVKFLQQQ (273 aa)) is catalytic. Residue Asp369 participates in substrate binding. Asp472 (nucleophile) is an active-site residue. Residue Glu498 is the Proton donor/acceptor of the active site. Positions 878, 880, 926, and 929 each coordinate Ca(2+). Disordered regions lie at residues 1176 to 1197 (NGWG…DGPP) and 1403 to 1439 (IKAA…SGGG). Residues 1407-1428 (NPNPGTGSNPGTGSNPGTDPGT) are compositionally biased toward low complexity. Over residues 1429–1439 (GSAGGNSSGGG) the composition is skewed to gly residues. Positions 1475-1479 (LAETG) match the LPXTG sorting signal motif. Thr1478 bears the Pentaglycyl murein peptidoglycan amidated threonine mark. Residues 1479–1509 (GFSGLVLPLGIGLMLLLIGAAAIIVRRHRHS) constitute a propeptide, removed by sortase.

Belongs to the glycosyl hydrolase 101 family. A subfamily.

Its subcellular location is the secreted. It localises to the cell wall. The catalysed reaction is a 3-O-[beta-D-galactosyl-(1-&gt;3)-N-acetyl-alpha-D-galactosaminyl]-L-threonyl-[protein] + H2O = beta-D-galactosyl-(1-&gt;3)-N-acetyl-D-galactosamine + L-threonyl-[protein]. The enzyme catalyses a 3-O-[beta-D-galactosyl-(1-&gt;3)-N-acetyl-alpha-D-galactosaminyl]-L-seryl-[protein] + H2O = beta-D-galactosyl-(1-&gt;3)-N-acetyl-D-galactosamine + L-seryl-[protein]. In terms of biological role, probably involved in the breakdown of mucin-type O-linked glycans. Specifically removes the T-antigen disaccharide (Gal-beta-1,3-GalNAc-alpha) from extracellular host glycoproteins. This is Putative endo-alpha-N-acetylgalactosaminidase from Renibacterium salmoninarum (strain ATCC 33209 / DSM 20767 / JCM 11484 / NBRC 15589 / NCIMB 2235).